The chain runs to 605 residues: MFRSFGRLFRGSEESPTINDLTSITIYPQCFISTGKEYGSEPKHISVHVRGWVYENPDLNNLGRKDRLMLNLLRRYVGLPPKSKETGTYPEKDDENTNLQVVVDTKAQLNVNVNDGKPNDIELSSTSKTENDPPLSLHTTPDDLQGNGVNVPNPSLSASRSWYQSGYGISGFFNRIMTPSVNSQYISTIGLAKCEEYFEERSLASLQRGLKDEFVLVKIYATDKNFEQKVVAEFNVATNVEGYFIIDEVIPFYTTKNNKFSVEAVLLQSTSEDKVIKAYMSEVPVLDRNGISIISDIDDTVKNTRVIEGPRKVGETTLLAPLNTQTIEGVSDWFRVMTNLNATVHFVSNSPWQLWPTLSKFFTNDNMPYISSIYLRHFNGVLQNIIEPAAARKRSSLLTAIRSLGDRKIVLIGDNGEQDLQIYAEMAACFPERILGIFIRDVMSDFCGVLKKQTTKSNSLPEVVQTKPFATSTPDTPLKEFTTTLKDVDNEQASEFYQLEKEPDTVPSTFILHRYYTYRIFVEDRANKTRKPVVQVEHAASKLENVHILCDYCKHKCSNIMEQDWFVQLARARGVIPLHIPIVIWFNGEEPISFTEDLLKSAFAS.

The interval 111–151 is disordered; that stretch reads VNVNDGKPNDIELSSTSKTENDPPLSLHTTPDDLQGNGVNV.

The protein resides in the golgi apparatus. This is an uncharacterized protein from Schizosaccharomyces pombe (strain 972 / ATCC 24843) (Fission yeast).